Reading from the N-terminus, the 439-residue chain is Phosphomethylpyrimidine synthase (439 aa).

Substrate contacts are provided by residues Asn-67, Met-96, Tyr-126, His-165, 187 to 189, 228 to 231, and Glu-267; these read SRG and DSLR. Position 271 (His-271) interacts with Zn(2+). Substrate is bound at residue Tyr-294. His-335 lines the Zn(2+) pocket. [4Fe-4S] cluster-binding residues include Cys-411, Cys-414, and Cys-418.

The protein belongs to the ThiC family. The cofactor is [4Fe-4S] cluster.

The enzyme catalyses 5-amino-1-(5-phospho-beta-D-ribosyl)imidazole + S-adenosyl-L-methionine = 4-amino-2-methyl-5-(phosphooxymethyl)pyrimidine + CO + 5'-deoxyadenosine + formate + L-methionine + 3 H(+). The protein operates within cofactor biosynthesis; thiamine diphosphate biosynthesis. Its function is as follows. Catalyzes the synthesis of the hydroxymethylpyrimidine phosphate (HMP-P) moiety of thiamine from aminoimidazole ribotide (AIR) in a radical S-adenosyl-L-methionine (SAM)-dependent reaction. This chain is Phosphomethylpyrimidine synthase, found in Ignicoccus hospitalis (strain KIN4/I / DSM 18386 / JCM 14125).